Consider the following 36-residue polypeptide: uncharacterized protein (36 aa).

This is an uncharacterized protein from Haemophilus influenzae (strain ATCC 51907 / DSM 11121 / KW20 / Rd).